Here is a 126-residue protein sequence, read N- to C-terminus: UPF0292 protein TSIB_0423 (126 aa).

A Toprim domain is found at 20–100 (NGVILVEGMR…RVDTNTRREL (81 aa)). The Mg(2+) site is built by glutamate 26, aspartate 69, and aspartate 71.

It belongs to the UPF0292 family. Requires Mg(2+) as cofactor.

The chain is UPF0292 protein TSIB_0423 from Thermococcus sibiricus (strain DSM 12597 / MM 739).